The primary structure comprises 106 residues: Putative membrane protein insertion efficiency factor (106 aa).

This sequence belongs to the UPF0161 family.

Its subcellular location is the cell inner membrane. Could be involved in insertion of integral membrane proteins into the membrane. The sequence is that of Putative membrane protein insertion efficiency factor from Methylacidiphilum infernorum (isolate V4) (Methylokorus infernorum (strain V4)).